The primary structure comprises 355 residues: tRNA pseudouridine synthase D (355 aa).

The Nucleophile role is filled by aspartate 84. Positions 160–306 (GVPNYFGLQR…MAHERRILRL (147 aa)) constitute a TRUD domain.

It belongs to the pseudouridine synthase TruD family.

The enzyme catalyses uridine(13) in tRNA = pseudouridine(13) in tRNA. Responsible for synthesis of pseudouridine from uracil-13 in transfer RNAs. The polypeptide is tRNA pseudouridine synthase D (Pseudomonas aeruginosa (strain ATCC 15692 / DSM 22644 / CIP 104116 / JCM 14847 / LMG 12228 / 1C / PRS 101 / PAO1)).